The chain runs to 285 residues: Probable endonuclease 4 (285 aa).

His67, His107, Glu144, Asp178, His181, His215, Asp228, His230, and Glu260 together coordinate Zn(2+).

Belongs to the AP endonuclease 2 family. The cofactor is Zn(2+).

The enzyme catalyses Endonucleolytic cleavage to 5'-phosphooligonucleotide end-products.. Functionally, endonuclease IV plays a role in DNA repair. It cleaves phosphodiester bonds at apurinic or apyrimidinic (AP) sites, generating a 3'-hydroxyl group and a 5'-terminal sugar phosphate. The sequence is that of Probable endonuclease 4 from Chloroflexus aurantiacus (strain ATCC 29366 / DSM 635 / J-10-fl).